Here is a 349-residue protein sequence, read N- to C-terminus: Putative transport protein YhhT (349 aa).

The Cytoplasmic segment spans residues 1 to 10; that stretch reads METPQPDKTG. The chain crosses the membrane as a helical span at residues 11-31; the sequence is MHILLKLASLVVILAGIHAAA. Asp32 is a topological domain (periplasmic). Residues 33–53 form a helical membrane-spanning segment; that stretch reads IIVQLLLALFFAIVLNPLVTW. Topologically, residues 54–62 are cytoplasmic; that stretch reads FIRRGVQRP. The helical transmembrane segment at 63 to 83 threads the bilayer; that stretch reads VAITIVVVVMLIALTALVGVL. Residues 84-142 are Periplasmic-facing; sequence AASFNEFISMLPKFNKELTRKLFKLQEMLPFLNLHMSPERMLQRMDSEKVVTFTTALMT. A helical membrane pass occupies residues 143 to 163; that stretch reads GLSGAMASVLLLVMTVVFMLF. Topologically, residues 164–208 are cytoplasmic; sequence EVRHVPYKMRFALNNPQIHIAGLHRALKGVSHYLALKTLLSLWTG. The helical transmembrane segment at 209–229 threads the bilayer; it reads VIVWLGLELMGVQFALMWAVL. At 230–234 the chain is on the periplasmic side; it reads AFLLN. The helical transmembrane segment at 235–255 threads the bilayer; the sequence is YVPNIGAVISAVPPMIQVLLF. Over 256–257 the chain is Cytoplasmic; the sequence is NG. Residues 258-278 form a helical membrane-spanning segment; it reads VYECILVGALFLVVHMVIGNI. Residues 279–292 are Periplasmic-facing; the sequence is LEPRMMGHRLGMST. Residues 293-313 traverse the membrane as a helical segment; it reads MVVFLSLLIWGWLLGPVGMLL. At 314–349 the chain is on the cytoplasmic side; it reads SVPLTSVCKIWMETTKGGSKLAILLGPGRPKSRLPG.

It belongs to the autoinducer-2 exporter (AI-2E) (TC 2.A.86) family.

It localises to the cell inner membrane. The sequence is that of Putative transport protein YhhT (yhhT) from Escherichia coli O157:H7.